The chain runs to 220 residues: Ribosomal RNA large subunit methyltransferase E (220 aa).

The S-adenosyl-L-methionine site is built by glycine 60, tryptophan 62, aspartate 92, aspartate 108, and aspartate 133. Catalysis depends on lysine 173, which acts as the Proton acceptor. Positions 197 to 220 (RKPKASRDKSSETFILGRQLKQPR) are disordered.

The protein belongs to the class I-like SAM-binding methyltransferase superfamily. RNA methyltransferase RlmE family.

It is found in the cytoplasm. It carries out the reaction uridine(2552) in 23S rRNA + S-adenosyl-L-methionine = 2'-O-methyluridine(2552) in 23S rRNA + S-adenosyl-L-homocysteine + H(+). In terms of biological role, specifically methylates the uridine in position 2552 of 23S rRNA at the 2'-O position of the ribose in the fully assembled 50S ribosomal subunit. This is Ribosomal RNA large subunit methyltransferase E from Burkholderia ambifaria (strain ATCC BAA-244 / DSM 16087 / CCUG 44356 / LMG 19182 / AMMD) (Burkholderia cepacia (strain AMMD)).